Consider the following 337-residue polypeptide: uncharacterized protein (337 aa).

The next 2 membrane-spanning stretches (helical) occupy residues 241–261 (FTLL…GAFI) and 273–293 (ASLI…IGII).

The protein belongs to the glycosyltransferase 2 family.

Its subcellular location is the cell membrane. This is an uncharacterized protein from Bacillus subtilis (strain 168).